Consider the following 892-residue polypeptide: Integrator complex subunit 6 (892 aa).

The region spanning 3-227 is the VWFA domain; that stretch reads ILLFLIDTSA…QCLESLVQKV (225 aa). An Inhibitory loop motif is present at residues 630–637; it reads MMIDEADE. Disordered regions lie at residues 665-692, 711-754, and 771-793; these read MSPL…GTQG, VGGT…AAPD, and PDHT…EVNE.

This sequence belongs to the Integrator subunit 6 family. Component of the Integrator complex, composed of core subunits INTS1, INTS2, INTS3, INTS4, INTS5, INTS6, INTS7, INTS8, INTS9/RC74, INTS10, INTS11/CPSF3L, INTS12, INTS13, INTS14 and INTS15. The core complex associates with protein phosphatase 2A subunits PPP2CA and PPP2R1A, to form the Integrator-PP2A (INTAC) complex.

It localises to the nucleus. Its subcellular location is the chromosome. Component of the integrator complex, a multiprotein complex that terminates RNA polymerase II (Pol II) transcription in the promoter-proximal region of genes. The integrator complex provides a quality checkpoint during transcription elongation by driving premature transcription termination of transcripts that are unfavorably configured for transcriptional elongation: the complex terminates transcription by (1) catalyzing dephosphorylation of the C-terminal domain (CTD) of Pol II subunit POLR2A/RPB1 and SUPT5H/SPT5, (2) degrading the exiting nascent RNA transcript via endonuclease activity and (3) promoting the release of Pol II from bound DNA. The integrator complex is also involved in terminating the synthesis of non-coding Pol II transcripts, such as enhancer RNAs (eRNAs), small nuclear RNAs (snRNAs), telomerase RNAs and long non-coding RNAs (lncRNAs). Within the integrator complex, INTS6 acts as a molecular adapter that promotes assembly of protein phosphatase 2A (PP2A) subunits to the integrator core complex, promoting recruitment of PP2A to transcription pause-release checkpoint. This chain is Integrator complex subunit 6 (ints6l), found in Danio rerio (Zebrafish).